We begin with the raw amino-acid sequence, 120 residues long: NAD(P)H-quinone oxidoreductase subunit 3, chloroplastic (120 aa).

3 helical membrane passes run 10–30 (FWVF…ISGV), 64–84 (IFAL…PWAM), and 88–108 (VLGV…IVGS).

This sequence belongs to the complex I subunit 3 family. In terms of assembly, NDH is composed of at least 16 different subunits, 5 of which are encoded in the nucleus.

The protein resides in the plastid. The protein localises to the chloroplast thylakoid membrane. It catalyses the reaction a plastoquinone + NADH + (n+1) H(+)(in) = a plastoquinol + NAD(+) + n H(+)(out). The catalysed reaction is a plastoquinone + NADPH + (n+1) H(+)(in) = a plastoquinol + NADP(+) + n H(+)(out). NDH shuttles electrons from NAD(P)H:plastoquinone, via FMN and iron-sulfur (Fe-S) centers, to quinones in the photosynthetic chain and possibly in a chloroplast respiratory chain. The immediate electron acceptor for the enzyme in this species is believed to be plastoquinone. Couples the redox reaction to proton translocation, and thus conserves the redox energy in a proton gradient. The sequence is that of NAD(P)H-quinone oxidoreductase subunit 3, chloroplastic from Pelargonium hortorum (Common geranium).